Here is a 254-residue protein sequence, read N- to C-terminus: Alcohol dehydrogenase (254 aa).

10-33 contacts NAD(+); it reads FVAGLGGIGLDTSREIVKSGPKNL. Substrate is bound at residue serine 138. Tyrosine 151 functions as the Proton acceptor in the catalytic mechanism.

Belongs to the short-chain dehydrogenases/reductases (SDR) family. Homodimer.

The enzyme catalyses a primary alcohol + NAD(+) = an aldehyde + NADH + H(+). It catalyses the reaction a secondary alcohol + NAD(+) = a ketone + NADH + H(+). This chain is Alcohol dehydrogenase (Adh), found in Drosophila picticornis (Fruit fly).